Here is a 94-residue protein sequence, read N- to C-terminus: DNA-directed RNA polymerase subunit Rpo11 (94 aa).

It belongs to the archaeal Rpo11/eukaryotic RPB11/RPC19 RNA polymerase subunit family. As to quaternary structure, part of the RNA polymerase complex.

The protein localises to the cytoplasm. The enzyme catalyses RNA(n) + a ribonucleoside 5'-triphosphate = RNA(n+1) + diphosphate. Functionally, DNA-dependent RNA polymerase (RNAP) catalyzes the transcription of DNA into RNA using the four ribonucleoside triphosphates as substrates. In Haloarcula marismortui (strain ATCC 43049 / DSM 3752 / JCM 8966 / VKM B-1809) (Halobacterium marismortui), this protein is DNA-directed RNA polymerase subunit Rpo11.